We begin with the raw amino-acid sequence, 346 residues long: Dihydroorotase (346 aa).

Residues His14 and His16 each coordinate Zn(2+). Residues 16–18 (HLR) and Asn42 contribute to the substrate site. Residues Lys100, His137, and His175 each coordinate Zn(2+). N6-carboxylysine is present on Lys100. His137 lines the substrate pocket. Leu220 serves as a coordination point for substrate. Asp248 lines the Zn(2+) pocket. Asp248 is a catalytic residue. Substrate contacts are provided by His252 and Ala264.

This sequence belongs to the metallo-dependent hydrolases superfamily. DHOase family. Class II DHOase subfamily. In terms of assembly, homodimer. Requires Zn(2+) as cofactor.

The catalysed reaction is (S)-dihydroorotate + H2O = N-carbamoyl-L-aspartate + H(+). The protein operates within pyrimidine metabolism; UMP biosynthesis via de novo pathway; (S)-dihydroorotate from bicarbonate: step 3/3. In terms of biological role, catalyzes the reversible cyclization of carbamoyl aspartate to dihydroorotate. In Novosphingobium aromaticivorans (strain ATCC 700278 / DSM 12444 / CCUG 56034 / CIP 105152 / NBRC 16084 / F199), this protein is Dihydroorotase.